The following is a 302-amino-acid chain: uncharacterized protein (302 aa).

This sequence belongs to the HAD-like hydrolase superfamily.

It is found in the cytoplasm. The protein localises to the nucleus. This is an uncharacterized protein from Schizosaccharomyces pombe (strain 972 / ATCC 24843) (Fission yeast).